The sequence spans 844 residues: RING finger containing E3 ubiquitin-protein ligase WSV222 (844 aa).

Alanine 229–threonine 236 provides a ligand contact to ATP. The segment at cysteine 308–arginine 359 adopts an RING-type; atypical zinc-finger fold.

As to quaternary structure, interacts with host UBE2E1/UBCH6; this interaction results in WSV222 auto-ubiquitination. Interacts with host tumor suppressor-like protein.

It carries out the reaction S-ubiquitinyl-[E2 ubiquitin-conjugating enzyme]-L-cysteine + [acceptor protein]-L-lysine = [E2 ubiquitin-conjugating enzyme]-L-cysteine + N(6)-ubiquitinyl-[acceptor protein]-L-lysine.. It functions in the pathway protein modification; protein ubiquitination. Its function is as follows. Probable E3 ubiquitin-protein ligase which accepts ubiquitin from the E2 ubiquitin-conjugating enzyme UBE2E1/UBCH6 in the form of a thioester and then directly transfers the ubiquitin to targeted substrates. Mediates ubiquitination of host tumor-suppressor-like protein (TSL) targeting it for degradation. Might function as an anti-apoptosis protein by counteracting TSL-induced apoptosis. This White spot syndrome virus (isolate Shrimp/China/Tongan/1996) (WSSV) protein is RING finger containing E3 ubiquitin-protein ligase WSV222.